The primary structure comprises 885 residues: Leucine--tRNA ligase (885 aa).

The 'HIGH' region motif lies at 48-58 (PYPSGKLHMGH). The 'KMSKS' region signature appears at 639-643 (TMSKS). Lys642 contacts ATP.

This sequence belongs to the class-I aminoacyl-tRNA synthetase family.

It is found in the cytoplasm. The enzyme catalyses tRNA(Leu) + L-leucine + ATP = L-leucyl-tRNA(Leu) + AMP + diphosphate. This is Leucine--tRNA ligase from Bordetella pertussis (strain Tohama I / ATCC BAA-589 / NCTC 13251).